The primary structure comprises 403 residues: Ribosomal RNA large subunit methyltransferase I (403 aa).

In terms of domain architecture, PUA spans 9–88 (YPRLVLSKGR…ESIDIAFFTR (80 aa)).

This sequence belongs to the methyltransferase superfamily. RlmI family.

It is found in the cytoplasm. It catalyses the reaction cytidine(1962) in 23S rRNA + S-adenosyl-L-methionine = 5-methylcytidine(1962) in 23S rRNA + S-adenosyl-L-homocysteine + H(+). Its function is as follows. Specifically methylates the cytosine at position 1962 (m5C1962) of 23S rRNA. The chain is Ribosomal RNA large subunit methyltransferase I from Salmonella paratyphi A (strain ATCC 9150 / SARB42).